The primary structure comprises 101 residues: Small ribosomal subunit protein uS14 (101 aa).

This sequence belongs to the universal ribosomal protein uS14 family. As to quaternary structure, part of the 30S ribosomal subunit. Contacts proteins S3 and S10.

Its function is as follows. Binds 16S rRNA, required for the assembly of 30S particles and may also be responsible for determining the conformation of the 16S rRNA at the A site. In Shewanella frigidimarina (strain NCIMB 400), this protein is Small ribosomal subunit protein uS14.